The following is a 132-amino-acid chain: NADH-quinone oxidoreductase subunit A (132 aa).

Transmembrane regions (helical) follow at residues 7–27 (YWVL…MIGV), 62–82 (FYLI…LYAW), and 91–111 (WTGY…LAYL).

This sequence belongs to the complex I subunit 3 family. NDH-1 is composed of 14 different subunits. Subunits NuoA, H, J, K, L, M, N constitute the membrane sector of the complex.

The protein localises to the cell inner membrane. It carries out the reaction a quinone + NADH + 5 H(+)(in) = a quinol + NAD(+) + 4 H(+)(out). NDH-1 shuttles electrons from NADH, via FMN and iron-sulfur (Fe-S) centers, to quinones in the respiratory chain. The immediate electron acceptor for the enzyme in this species is believed to be ubiquinone. Couples the redox reaction to proton translocation (for every two electrons transferred, four hydrogen ions are translocated across the cytoplasmic membrane), and thus conserves the redox energy in a proton gradient. In Acidiphilium cryptum (strain JF-5), this protein is NADH-quinone oxidoreductase subunit A.